The chain runs to 274 residues: Large ribosomal subunit protein uL2cz/uL2cy (274 aa).

Disordered regions lie at residues 1–22 and 224–274; these read MAINLYKTSTPSTRNGTVDSQV and NPVD…RRSK.

Belongs to the universal ribosomal protein uL2 family. As to quaternary structure, part of the 50S ribosomal subunit.

It is found in the plastid. The protein resides in the chloroplast. This Helianthus annuus (Common sunflower) protein is Large ribosomal subunit protein uL2cz/uL2cy (rpl2-A).